Consider the following 494-residue polypeptide: Ketol-acid reductoisomerase (NADP(+)) (494 aa).

Positions 14–208 (LEQLGKCRFM…GGHRAGVLQS (195 aa)) constitute a KARI N-terminal Rossmann domain. NADP(+)-binding positions include 45 to 48 (CGAQ), Arg68, Arg76, Ser78, and 108 to 110 (DKQ). His132 is a catalytic residue. Gly158 contacts NADP(+). 2 KARI C-terminal knotted domains span residues 209–344 (SFVA…NAPA) and 345–487 (FDGA…MKDM). Mg(2+) contacts are provided by Asp217, Glu221, Glu389, and Glu393. Residue Ser414 coordinates substrate.

It belongs to the ketol-acid reductoisomerase family. The cofactor is Mg(2+).

The enzyme catalyses (2R)-2,3-dihydroxy-3-methylbutanoate + NADP(+) = (2S)-2-acetolactate + NADPH + H(+). The catalysed reaction is (2R,3R)-2,3-dihydroxy-3-methylpentanoate + NADP(+) = (S)-2-ethyl-2-hydroxy-3-oxobutanoate + NADPH + H(+). Its pathway is amino-acid biosynthesis; L-isoleucine biosynthesis; L-isoleucine from 2-oxobutanoate: step 2/4. The protein operates within amino-acid biosynthesis; L-valine biosynthesis; L-valine from pyruvate: step 2/4. Functionally, involved in the biosynthesis of branched-chain amino acids (BCAA). Catalyzes an alkyl-migration followed by a ketol-acid reduction of (S)-2-acetolactate (S2AL) to yield (R)-2,3-dihydroxy-isovalerate. In the isomerase reaction, S2AL is rearranged via a Mg-dependent methyl migration to produce 3-hydroxy-3-methyl-2-ketobutyrate (HMKB). In the reductase reaction, this 2-ketoacid undergoes a metal-dependent reduction by NADPH to yield (R)-2,3-dihydroxy-isovalerate. The protein is Ketol-acid reductoisomerase (NADP(+)) of Tolumonas auensis (strain DSM 9187 / NBRC 110442 / TA 4).